A 302-amino-acid chain; its full sequence is Myeloid-associated differentiation marker-like protein 2 (302 aa).

2 consecutive MARVEL domains span residues 13-149 (AIWS…AKPG) and 154-298 (YMAT…RLRI). 7 helical membrane passes run 45 to 65 (AYGTFCVFVWAFCFALTILIV), 87 to 107 (AYAMLATLMTLTAAVIYPMYF), 124 to 144 (LAVSVCAALLFVTYAVEVFLT), 158 to 178 (ASGLLKVVQAFVACVIFGALA), 191 to 211 (WCVAVYSFCFGVTMVVVILNI), 225 to 245 (FVVIYTVLAILMYISAAVIWP), and 273 to 293 (LAVTIFTHINLILYIADLIYT).

Belongs to the MAL family.

It is found in the membrane. This is Myeloid-associated differentiation marker-like protein 2 (myadml2) from Xenopus laevis (African clawed frog).